The sequence spans 173 residues: Ribosome maturation factor RimM (173 aa).

The PRC barrel domain maps to 98–170; that stretch reads EDEYYWCDLI…RMLITPLEGL (73 aa).

This sequence belongs to the RimM family. Binds ribosomal protein uS19.

Its subcellular location is the cytoplasm. Functionally, an accessory protein needed during the final step in the assembly of 30S ribosomal subunit, possibly for assembly of the head region. Essential for efficient processing of 16S rRNA. May be needed both before and after RbfA during the maturation of 16S rRNA. It has affinity for free ribosomal 30S subunits but not for 70S ribosomes. This is Ribosome maturation factor RimM from Pelobacter propionicus (strain DSM 2379 / NBRC 103807 / OttBd1).